Reading from the N-terminus, the 95-residue chain is Large ribosomal subunit protein bL25 (95 aa).

The protein belongs to the bacterial ribosomal protein bL25 family. As to quaternary structure, part of the 50S ribosomal subunit; part of the 5S rRNA/L5/L18/L25 subcomplex. Contacts the 5S rRNA. Binds to the 5S rRNA independently of L5 and L18.

In terms of biological role, this is one of the proteins that binds to the 5S RNA in the ribosome where it forms part of the central protuberance. This is Large ribosomal subunit protein bL25 from Haemophilus influenzae (strain 86-028NP).